The following is a 504-amino-acid chain: Lysine--tRNA ligase (504 aa).

Glu-411 and Glu-418 together coordinate Mg(2+).

This sequence belongs to the class-II aminoacyl-tRNA synthetase family. In terms of assembly, homodimer. Mg(2+) serves as cofactor.

The protein resides in the cytoplasm. The enzyme catalyses tRNA(Lys) + L-lysine + ATP = L-lysyl-tRNA(Lys) + AMP + diphosphate. This chain is Lysine--tRNA ligase, found in Clostridium botulinum (strain Okra / Type B1).